We begin with the raw amino-acid sequence, 129 residues long: Small ribosomal subunit protein uS9 (129 aa).

The protein belongs to the universal ribosomal protein uS9 family.

The chain is Small ribosomal subunit protein uS9 from Helicobacter pylori (strain P12).